A 37-amino-acid chain; its full sequence is Cytochrome b6-f complex subunit 5 (37 aa).

A helical transmembrane segment spans residues 5–25 (LLSGIVLGLVPVTIAGLFVTA).

This sequence belongs to the PetG family. The 4 large subunits of the cytochrome b6-f complex are cytochrome b6, subunit IV (17 kDa polypeptide, PetD), cytochrome f and the Rieske protein, while the 4 small subunits are PetG, PetL, PetM and PetN. The complex functions as a dimer.

The protein localises to the plastid. It is found in the chloroplast thylakoid membrane. In terms of biological role, component of the cytochrome b6-f complex, which mediates electron transfer between photosystem II (PSII) and photosystem I (PSI), cyclic electron flow around PSI, and state transitions. PetG is required for either the stability or assembly of the cytochrome b6-f complex. The polypeptide is Cytochrome b6-f complex subunit 5 (Stigeoclonium helveticum (Green alga)).